The primary structure comprises 343 residues: MKVSIIGATGYGGLELIRLLHQHASVDIATLHSFSAQSETLATFYPHLKDLEASPLEKINSAEIIEKSDTVFIATPSGIAKDIALPYVDAGLNVIDLSGDFRLKDRQLYEKWYGKSAAPIEYIAKAEYGLAEFRDKKEARFIANPGCYATATLLGIAPLVISQLIDPTSIIVDAKSGISGAGKVPSASTHFTETNENMTLYKMNSHQHIPEIMQQLTKWDETIPAIQFSTSLIPITRGIFTTIYVKPKNPITQKELHTLYKSTYENAPFVRIQPENVYPTVKQVTASNYCDIGLAYNEKTNVITIVSVIDNLVKGAAGQAIQNLNIMANFAESDGLRFIPVYP.

Cys-147 is a catalytic residue.

The protein belongs to the NAGSA dehydrogenase family. Type 1 subfamily.

The protein resides in the cytoplasm. It catalyses the reaction N-acetyl-L-glutamate 5-semialdehyde + phosphate + NADP(+) = N-acetyl-L-glutamyl 5-phosphate + NADPH + H(+). It participates in amino-acid biosynthesis; L-arginine biosynthesis; N(2)-acetyl-L-ornithine from L-glutamate: step 3/4. Its function is as follows. Catalyzes the NADPH-dependent reduction of N-acetyl-5-glutamyl phosphate to yield N-acetyl-L-glutamate 5-semialdehyde. In Listeria monocytogenes serotype 4b (strain F2365), this protein is N-acetyl-gamma-glutamyl-phosphate reductase.